Here is a 234-residue protein sequence, read N- to C-terminus: Probable chemoreceptor glutamine deamidase CheD 1 (234 aa).

It belongs to the CheD family.

It catalyses the reaction L-glutaminyl-[protein] + H2O = L-glutamyl-[protein] + NH4(+). In terms of biological role, probably deamidates glutamine residues to glutamate on methyl-accepting chemotaxis receptors (MCPs), playing an important role in chemotaxis. In Albidiferax ferrireducens (strain ATCC BAA-621 / DSM 15236 / T118) (Rhodoferax ferrireducens), this protein is Probable chemoreceptor glutamine deamidase CheD 1.